The chain runs to 54 residues: Defensin-like protein 1 (54 aa).

4 disulfide bridges follow: Cys-6/Cys-54, Cys-17/Cys-39, Cys-23/Cys-48, and Cys-27/Cys-50.

Belongs to the DEFL family.

It is found in the secreted. Its function is as follows. Possesses antifungal activity insensitive to inorganic cations. Causes germ tubes and hyphae to swell and form multiple hyphal buds. Binds to the plasma membrane of the fungus. Has no inhibitory effect on insect gut alpha-amylase. The chain is Defensin-like protein 1 from Heuchera sanguinea (Coralbells).